Consider the following 204-residue polypeptide: Large ribosomal subunit protein uL13 (204 aa).

The protein belongs to the universal ribosomal protein uL13 family.

In Spodoptera frugiperda (Fall armyworm), this protein is Large ribosomal subunit protein uL13 (RpL13A).